Here is a 124-residue protein sequence, read N- to C-terminus: Glycine cleavage system H protein (124 aa).

The region spanning 19–101 (VATVGITDHA…ESGAWFFRMT (83 aa)) is the Lipoyl-binding domain. K60 carries the N6-lipoyllysine modification.

This sequence belongs to the GcvH family. In terms of assembly, the glycine cleavage system is composed of four proteins: P, T, L and H. The cofactor is (R)-lipoate.

Its function is as follows. The glycine cleavage system catalyzes the degradation of glycine. The H protein shuttles the methylamine group of glycine from the P protein to the T protein. The chain is Glycine cleavage system H protein from Acidiphilium cryptum (strain JF-5).